The primary structure comprises 154 residues: Probable archaeosortase D (154 aa).

A run of 4 helical transmembrane segments spans residues 6-26 (AIYI…LKML), 57-77 (IIEI…LGYI), 91-111 (YSVF…ILII), and 125-145 (VISF…IYLL). The Acyl-thioester intermediate role is filled by C64. Residue R106 is the Proton donor of the active site.

The protein belongs to the exosortase/archaeosortase family. Archaeosortase D subfamily.

It is found in the cell membrane. In terms of biological role, transpeptidase that recognizes and modifies its substrate by proteolytic cleavage of a sorting signal. Following cleavage, a covalent intermediate is formed via a thioester bond between the archaeosortase and its substrate, which is then transferred and covalently attached to the cell membrane. In Methanocaldococcus jannaschii (strain ATCC 43067 / DSM 2661 / JAL-1 / JCM 10045 / NBRC 100440) (Methanococcus jannaschii), this protein is Probable archaeosortase D.